We begin with the raw amino-acid sequence, 449 residues long: 1H-pyrrole-2-carbonyl-[peptidyl-carrier protein] chlorinase (449 aa).

9 residues coordinate FAD: alanine 16, glutamate 35, arginine 41, histidine 43, valine 44, serine 47, arginine 123, isoleucine 147, and aspartate 316. Serine 327 and glycine 328 together coordinate chloride. Valine 329 serves as a coordination point for FAD.

Belongs to the flavin-dependent halogenase family. Homodimer.

It carries out the reaction (1H-pyrrole-2-carbonyl)-[peptidyl-carrier protein] + 2 FADH2 + 2 chloride + 2 O2 = (4,5-dichloro-1H-pyrrole-2-carbonyl)-[peptidyl-carrier protein] + 2 FAD + 4 H2O. The catalysed reaction is (1H-pyrrole-2-carbonyl)-[peptidyl-carrier protein] + FADH2 + chloride + O2 = (5-chloro-1H-pyrrole-2-carbonyl)-[peptidyl-carrier protein] + FAD + 2 H2O. It catalyses the reaction (5-chloro-1H-pyrrole-2-carbonyl)-[peptidyl-carrier protein] + FADH2 + chloride + O2 = (4,5-dichloro-1H-pyrrole-2-carbonyl)-[peptidyl-carrier protein] + FAD + 2 H2O. Its pathway is antibiotic biosynthesis. Involved in the biosynthesis of the antibiotic pyoluteorin. Catalyzes the dichlorination of the pyrrole ring of pyrrolyl-S-PltL, generating the 5-chloropyrrolyl-S-PltL intermediate and then the 4,5-dichloropyrrolyl-S-PltL product. The chain is 1H-pyrrole-2-carbonyl-[peptidyl-carrier protein] chlorinase from Pseudomonas fluorescens (strain ATCC BAA-477 / NRRL B-23932 / Pf-5).